A 303-amino-acid polypeptide reads, in one-letter code: Quinolinate synthase (303 aa).

The iminosuccinate site is built by His-23 and Ser-40. Cys-85 contacts [4Fe-4S] cluster. Iminosuccinate is bound by residues Tyr-111–Asn-113 and Ser-128. Residue Cys-171 participates in [4Fe-4S] cluster binding. Iminosuccinate contacts are provided by residues His-197 to Glu-199 and Thr-214. Cys-259 lines the [4Fe-4S] cluster pocket.

This sequence belongs to the quinolinate synthase family. Type 2 subfamily. Requires [4Fe-4S] cluster as cofactor.

The protein resides in the cytoplasm. It carries out the reaction iminosuccinate + dihydroxyacetone phosphate = quinolinate + phosphate + 2 H2O + H(+). It participates in cofactor biosynthesis; NAD(+) biosynthesis; quinolinate from iminoaspartate: step 1/1. In terms of biological role, catalyzes the condensation of iminoaspartate with dihydroxyacetone phosphate to form quinolinate. This chain is Quinolinate synthase, found in Clostridium acetobutylicum (strain ATCC 824 / DSM 792 / JCM 1419 / IAM 19013 / LMG 5710 / NBRC 13948 / NRRL B-527 / VKM B-1787 / 2291 / W).